The primary structure comprises 217 residues: Nuclear transcription factor Y subunit C-3 (217 aa).

Residues 1-28 are compositionally biased toward polar residues; it reads MDQQGQSSAMNYGSNPYQTNAMTTTPTG. 2 disordered regions span residues 1 to 29 and 198 to 217; these read MDQQ…PTGS and PYMG…DPDN.

This sequence belongs to the NFYC/HAP5 subunit family. Heterotrimeric transcription factor composed of three components, NF-YA, NF-YB and NF-YC. NF-YB and NF-YC must interact and dimerize for NF-YA association and DNA binding. In terms of tissue distribution, ubiquitous.

It is found in the nucleus. Its function is as follows. Stimulates the transcription of various genes by recognizing and binding to a CCAAT motif in promoters. This is Nuclear transcription factor Y subunit C-3 (NFYC3) from Arabidopsis thaliana (Mouse-ear cress).